The chain runs to 451 residues: Histidinol dehydrogenase (451 aa).

Residues Met1–Ala20 form a disordered region. Residues Leu7–Arg19 show a composition bias toward basic and acidic residues. NAD(+) is bound by residues Tyr129, Gln193, and Asn218. Residues Thr241, Gln263, and His266 each contribute to the substrate site. Zn(2+) contacts are provided by Gln263 and His266. Active-site proton acceptor residues include Glu332 and His333. Substrate is bound by residues His333, Asp366, Glu420, and His425. Asp366 is a Zn(2+) binding site. His425 provides a ligand contact to Zn(2+).

This sequence belongs to the histidinol dehydrogenase family. The cofactor is Zn(2+).

It catalyses the reaction L-histidinol + 2 NAD(+) + H2O = L-histidine + 2 NADH + 3 H(+). It participates in amino-acid biosynthesis; L-histidine biosynthesis; L-histidine from 5-phospho-alpha-D-ribose 1-diphosphate: step 9/9. In terms of biological role, catalyzes the sequential NAD-dependent oxidations of L-histidinol to L-histidinaldehyde and then to L-histidine. The sequence is that of Histidinol dehydrogenase from Corynebacterium efficiens (strain DSM 44549 / YS-314 / AJ 12310 / JCM 11189 / NBRC 100395).